A 594-amino-acid chain; its full sequence is MNELIKHKLELLPDSPGCYLHKDKAGTIIYVGKAKNLRNRVRSYFRGSHDTKTELLVSEIADFEFIVTGSNTEALLLEINLIQENMPKYNIKLKDDKSYPFIKITNEPFPRLLITRQIKKNDGLYFGPYPDAYTATEVKKLLDRIFPFKKCKNPVNKVCFYYHLGQCQAHTICHTDKAYWDSLVADVKQFLNGKDDKIIDDLRSKMLEASNKQEFERAAEYRDLISGIATMRTKQRVMSKDLQDRDIFGYFVDKGWMCVQVFFVRQGKLIQRDVNMFPYYNEAEEDFLTYVGQFYSDQRHLIPKEIFIPETIDETLVAAIVPARIVKPQRGEKKQLVALATKNARVSLQQKFDLLEKDLRKTSGAIEHLGQLLGIEKPVRIEAFDNSNIQGTSPVAAMVVFVDGKPSKKDYRKFKIKTVIGPDDYASMREVIYRRYSRVKHEGLQVPDLIIVDGGQGQVKAARDVIEHQLGLSIPVAGLQKNDKHQTHELLFGNPLAVVELPRNSEEFFLLHRIQDEVHRFAITFHRQVRSKNAFSSKLDHIAGLGPKRKQLLLKRFKSMTALEQASLEEIQQLGIPKTVAEALFDHLTSKSEV.

The GIY-YIG domain maps to 14–91 (DSPGCYLHKD…IQENMPKYNI (78 aa)). A UVR domain is found at 196–231 (DKIIDDLRSKMLEASNKQEFERAAEYRDLISGIATM).

It belongs to the UvrC family. Interacts with UvrB in an incision complex.

The protein localises to the cytoplasm. Its function is as follows. The UvrABC repair system catalyzes the recognition and processing of DNA lesions. UvrC both incises the 5' and 3' sides of the lesion. The N-terminal half is responsible for the 3' incision and the C-terminal half is responsible for the 5' incision. The polypeptide is UvrABC system protein C (Streptococcus equi subsp. zooepidemicus (strain MGCS10565)).